Reading from the N-terminus, the 418-residue chain is Odorant receptor 13a (418 aa).

The Cytoplasmic segment spans residues 1-38 (MFYSYPYKALSFPIQCVWLKLNGSWPLTESSRPWRSQS). Residues 39–59 (LLATAYIVWAWYVIASVGITI) form a helical membrane-spanning segment. Over 60–70 (SYQTAFLLNNL) the chain is Extracellular. Residue Asn-69 is glycosylated (N-linked (GlcNAc...) asparagine). The chain crosses the membrane as a helical span at residues 71 to 91 (SDIIITTENCCTTFMGVLNFV). Residues 92 to 140 (RLIHLRLNQRKFRQLIENFSYEIWIPNSSKNNVAAECRRRMVTFSIMTS) are Cytoplasmic-facing. Residues 141 to 161 (LLACLIIMYCVLPLVEIFFGP) traverse the membrane as a helical segment. Residues 162-195 (AFDAQNKPFPYKMIFPYDAQSSWIRYVMTYIFTS) are Extracellular-facing. A helical membrane pass occupies residues 196-216 (YAGICVVTTLFAEDTILGFFI). Residues 217–273 (TYTCGQFHLLHQRIAGLFAGSNAELAESIQLERLKRIVEKHNNIISFAKRLEDFFNP) are Cytoplasmic-facing. A helical membrane pass occupies residues 274 to 294 (ILLANLMISSVLICMVGFQIV). Residues 295–299 (TGKNM) are Extracellular-facing. The chain crosses the membrane as a helical span at residues 300–320 (FIGDYVKFIIYISSALSQLYV). Residues 321–385 (LCENGDALIK…PVRITAFKFS (65 aa)) lie on the Cytoplasmic side of the membrane. A helical transmembrane segment spans residues 386–406 (TLSLQSFTAILSTSISYFTLL). The Extracellular portion of the chain corresponds to 407–418 (RSVYFDDEKKLD).

Belongs to the insect chemoreceptor superfamily. Heteromeric odorant receptor channel (TC 1.A.69) family. Or1a subfamily. Interacts with Orco. Complexes exist early in the endomembrane system in olfactory sensory neurons (OSNs), coupling these complexes to the conserved ciliary trafficking pathway. In terms of tissue distribution, expressed in olfactory sensory neurons in the antenna.

It is found in the cell membrane. Odorant receptor which mediates acceptance or avoidance behavior, depending on its substrates. The odorant receptor repertoire encodes a large collection of odor stimuli that vary widely in identity, intensity, and duration. May form a complex with Orco to form odorant-sensing units, providing sensitive and prolonged odorant signaling and calcium permeability. Involved in the behavioral responses to octanol, nonanol, and pentyl acetate. This chain is Odorant receptor 13a (Or13a), found in Drosophila melanogaster (Fruit fly).